A 991-amino-acid polypeptide reads, in one-letter code: Antigenic heat-stable 120 kDa protein (991 aa).

Disordered stretches follow at residues 1–37 (DTSE…TPAL), 54–73 (TPSM…TSDP), and 348–384 (GQSK…TNQP). Over residues 12–29 (EYTEEQKQTEEQEQKEFL) the composition is skewed to basic and acidic residues. A compositionally biased stretch (polar residues) spans 348 to 373 (GQSKEQPLITPQQTTSSSVEPPQYKQ).

It localises to the cytoplasm. In Rickettsia sibirica, this protein is Antigenic heat-stable 120 kDa protein (sca4).